A 1534-amino-acid polypeptide reads, in one-letter code: Slit homolog 1 protein (1534 aa).

Positions 1–33 (MALTPGWGSSAGPVRPELWLLLWAAAWRLGASA) are cleaved as a signal peptide. The LRRNT domain occupies 34 to 61 (CPALCTCTGTTVDCHGTGLQAIPKNIPR). LRR repeat units lie at residues 62–83 (NTER…DFAG), 86–107 (QLRV…AFDD), 110–131 (ELER…LFQN), 134–155 (ALSR…AFRG), 158–179 (DLKN…AFRA), and 182–203 (GLEV…SFNH). A glycan (N-linked (GlcNAc...) asparagine) is linked at Asn72. The N-linked (GlcNAc...) asparagine glycan is linked to Asn192. Residues 215 to 265 (NHLFCDCHLAWLSQWLRQRPTIGLFTQCSGPASLRGLNVAEVQKSEFSCSG) form the LRRCT 1 domain. The LRRNT 2 domain maps to 273-309 (PTCTLSSGSCPAMCTCSNGIVDCRGKGLTAIPANLPE). Cys286 and Cys295 form a disulfide bridge. 5 LRR repeats span residues 310–331 (TMTE…AFSP), 334–355 (KLRR…AFQG), 358–379 (SLNS…VFGG), 382–403 (TLQL…AFQD), and 406–427 (NLSL…TFTS). Asn406 is a glycosylation site (N-linked (GlcNAc...) asparagine). Residues 439 to 489 (NPFICDCNLKWLADFLRTNPIETSGARCASPRRLANKRIGQIKSKKFRCSA) form the LRRCT 2 domain. Disulfide bonds link Cys443-Cys466, Cys445-Cys487, Cys513-Cys519, and Cys517-Cys526. An LRRNT 3 domain is found at 504–540 (NSECNSDVVCPHKCRCEANVVECSSLKLTKIPERIPQ). LRR repeat units lie at residues 541–562 (STAE…GMFK), 566–587 (HLKK…AFEG), 590–611 (SVSE…MFRG), 614–635 (GLRT…SFTG), and 638–659 (NVRL…AFDT). Asn571 carries N-linked (GlcNAc...) asparagine glycosylation. An N-linked (GlcNAc...) asparagine glycan is attached at Asn630. In terms of domain architecture, LRRCT 3 spans 671 to 721 (NPFNCNCQLAWLGGWLRKRKIVTGNPRCQNPDFLRQIPLQDVAFPDFRCEE). 2 disulfide bridges follow: Cys675–Cys698 and Cys677–Cys719. The LRRNT 4 domain maps to 725-761 (EGGCLPRPQCPQECACLDTVVRCSNKHLRALPKGIPK). N-linked (GlcNAc...) asparagine glycosylation is found at Asn762, Asn801, and Asn806. LRR repeat units follow at residues 762–783 (NVTE…LSTF), 785–806 (YLQL…SFTN), 809–830 (QLTT…AFQG), and 833–854 (SLRL…IFAD). Residues 866 to 916 (NPLYCDCHLRWLSSWVKTGYKEPGIARCAGPQDMEGKLLLTTPAKKFECQG) enclose the LRRCT 4 domain. EGF-like domains follow at residues 927 to 962 (DLCL…RDCE), 964 to 1003 (SLDS…PTCG), 1005 to 1041 (NTDD…KACE), 1043 to 1081 (LVDL…DNCS), 1083 to 1119 (NQDD…QLCE), and 1127 to 1163 (PKSP…PECE). 18 disulfides stabilise this stretch: Cys929/Cys940, Cys934/Cys950, Cys952/Cys961, Cys968/Cys979, Cys973/Cys991, Cys993/Cys1002, Cys1009/Cys1020, Cys1014/Cys1029, Cys1031/Cys1040, Cys1047/Cys1060, Cys1054/Cys1069, Cys1071/Cys1080, Cys1087/Cys1098, Cys1092/Cys1107, Cys1109/Cys1118, Cys1131/Cys1142, Cys1136/Cys1151, and Cys1153/Cys1162. Asn1026 is a glycosylation site (N-linked (GlcNAc...) asparagine). The N-linked (GlcNAc...) asparagine glycan is linked to Asn1079. In terms of domain architecture, Laminin G-like spans 1166 to 1339 (LSVNFVDRDT…QMKPGVVPGC (174 aa)). Residues Asn1189, Asn1259, and Asn1306 are each glycosylated (N-linked (GlcNAc...) asparagine). Cystine bridges form between Cys1313-Cys1339, Cys1342-Cys1352, Cys1347-Cys1362, Cys1364-Cys1373, Cys1381-Cys1391, Cys1386-Cys1401, Cys1403-Cys1412, Cys1422-Cys1432, Cys1427-Cys1442, Cys1444-Cys1453, Cys1459-Cys1498, Cys1477-Cys1512, Cys1488-Cys1528, and Cys1492-Cys1530. EGF-like domains are found at residues 1340 to 1374 (EPCR…LHCD), 1377 to 1413 (ADGP…ALCN), and 1418 to 1454 (LAEP…ELCE). The CTCK domain maps to 1459 to 1534 (CRGDPVRDFH…PTKCGCALCA (76 aa)).

As to quaternary structure, interacts with ROBO1 and GREM1. In terms of tissue distribution, predominantly expressed in adult forebrain. Expressed in fetal brain, lung and kidney.

Its subcellular location is the secreted. In terms of biological role, thought to act as molecular guidance cue in cellular migration, and function appears to be mediated by interaction with roundabout homolog receptors. During neural development involved in axonal navigation at the ventral midline of the neural tube and projection of axons to different regions. SLIT1 and SLIT2 together seem to be essential for midline guidance in the forebrain by acting as repulsive signal preventing inappropriate midline crossing by axons projecting from the olfactory bulb. This is Slit homolog 1 protein (SLIT1) from Homo sapiens (Human).